A 138-amino-acid chain; its full sequence is Putative pre-16S rRNA nuclease (138 aa).

Belongs to the YqgF nuclease family.

Its subcellular location is the cytoplasm. Could be a nuclease involved in processing of the 5'-end of pre-16S rRNA. This chain is Putative pre-16S rRNA nuclease, found in Clostridium beijerinckii (strain ATCC 51743 / NCIMB 8052) (Clostridium acetobutylicum).